Here is a 361-residue protein sequence, read N- to C-terminus: Ribosomal RNA small subunit methyltransferase H (361 aa).

Residues 54–56 (GGH), D74, Y101, D122, and Q129 contribute to the S-adenosyl-L-methionine site. The segment at 318-361 (ARNSRASSAKLRAAQRLAEGQAPRPRRRNKYAPEGRDEPEGGAA) is disordered. Residues 348 to 361 (YAPEGRDEPEGGAA) are compositionally biased toward basic and acidic residues.

This sequence belongs to the methyltransferase superfamily. RsmH family.

It is found in the cytoplasm. The enzyme catalyses cytidine(1402) in 16S rRNA + S-adenosyl-L-methionine = N(4)-methylcytidine(1402) in 16S rRNA + S-adenosyl-L-homocysteine + H(+). Specifically methylates the N4 position of cytidine in position 1402 (C1402) of 16S rRNA. The sequence is that of Ribosomal RNA small subunit methyltransferase H from Nitratidesulfovibrio vulgaris (strain DSM 19637 / Miyazaki F) (Desulfovibrio vulgaris).